The sequence spans 308 residues: Barttin (308 aa).

Residues Met-1–Lys-5 lie on the Cytoplasmic side of the membrane. Positions Met-1 to Met-72 are regulates channel membrane trafficking and anion conductance. Residues Thr-6 to Met-26 form a helical membrane-spanning segment. At Ser-27 to Gln-32 the chain is on the extracellular side. Residues Val-33–Met-53 form a helical membrane-spanning segment. Residues Cys-54 and Cys-56 are each lipidated (S-palmitoyl cysteine). Over Cys-54–Gly-308 the chain is Cytoplasmic. Ser-79 and Ser-107 each carry phosphoserine. Disordered regions lie at residues Pro-127 to Gln-149 and Leu-162 to Gly-308. Positions Leu-162–Arg-171 are enriched in basic and acidic residues. The segment covering Ser-172 to Ser-183 has biased composition (polar residues). Residues Glu-274–Leu-283 are compositionally biased toward acidic residues. Ser-290 carries the phosphoserine modification.

Interacts with CLCNK channels. Forms heteromers with CLCNKA in the thin ascending limb of Henle and with CLCNKB in the thick ascending limb and more distal segments. Post-translationally, palmitoylation is necessary for activation of plasma membrane-inserted CLC-K/barttin channels. Expressed along the distal nephron.

The protein localises to the basolateral cell membrane. In terms of biological role, regulatory subunit of anion-selective CLCNKA:BSND and CLCNKB:BSND heteromeric channels involved in basolateral chloride conductance along the nephron to achieve urine concentration and maintain systemic acid-base homeostasis, and in the stria vascularis of the inner ear to establish the endocochlear potential necessary for normal hearing. Most likely acts as a chaperone that allosterically regulates proper sorting of CLCNKA:BSND and CLCNKB:BSND channels at the basolateral plasma membrane domain and functional switch to ion conducting state. Mediates constitutive opening of channel common gates. This Rattus norvegicus (Rat) protein is Barttin.